Reading from the N-terminus, the 350-residue chain is MTDSPEIPYLLRAAKGEILPRPPVWMMRQAGRYMQIYRELRDKYPSFRERSENADLAIEISLQPWRAFQPDGVIMFSDILTPLAGIGIPFDIIESKGPIIDSPIRTQAQVDQLNPLDPDQSLPFIKTILKTLRQEVGNKSTVLGFVGAPWTLAAYAVEGKGSKSYSVIKGMAFSEPSVLHQFLDKLADMIATYVRYQIDCGAQVVQMFDSWAGQLTPQDYDVFALPYQQKVVRLVKETHPDTPLILYISGSAGVLERMGKSGVDIISVDWTVDLAEARQRLGKAMMVQGNIDPGVLFGSQSFIRERIIDTIRKAGNQGHILNLGHGVLVGTPEDNVRFFFETAKQFSYQD.

Residues 28–32, D78, Y155, S210, and H325 contribute to the substrate site; that span reads RQAGR.

The protein belongs to the uroporphyrinogen decarboxylase family. As to quaternary structure, homodimer.

The protein localises to the cytoplasm. It carries out the reaction uroporphyrinogen III + 4 H(+) = coproporphyrinogen III + 4 CO2. It participates in porphyrin-containing compound metabolism; protoporphyrin-IX biosynthesis; coproporphyrinogen-III from 5-aminolevulinate: step 4/4. In terms of biological role, catalyzes the decarboxylation of four acetate groups of uroporphyrinogen-III to yield coproporphyrinogen-III. This is Uroporphyrinogen decarboxylase from Microcystis aeruginosa (strain NIES-843 / IAM M-2473).